A 352-amino-acid polypeptide reads, in one-letter code: N-acetyl-gamma-glutamyl-phosphate reductase (352 aa).

Residue Cys155 is part of the active site.

This sequence belongs to the NAGSA dehydrogenase family. Type 1 subfamily.

Its subcellular location is the cytoplasm. The catalysed reaction is N-acetyl-L-glutamate 5-semialdehyde + phosphate + NADP(+) = N-acetyl-L-glutamyl 5-phosphate + NADPH + H(+). Its pathway is amino-acid biosynthesis; L-arginine biosynthesis; N(2)-acetyl-L-ornithine from L-glutamate: step 3/4. Its function is as follows. Catalyzes the NADPH-dependent reduction of N-acetyl-5-glutamyl phosphate to yield N-acetyl-L-glutamate 5-semialdehyde. This is N-acetyl-gamma-glutamyl-phosphate reductase from Picosynechococcus sp. (strain ATCC 27264 / PCC 7002 / PR-6) (Agmenellum quadruplicatum).